Consider the following 202-residue polypeptide: MENLIIYAFIYLLGSISFGLILTKFFAKTDIKKEGSRSIGATNVLRVVKEKNPKLAKKLAIATIILDFAKAAIPLLILKFLHYDQALLWSVAVLAIFGHCFSIYLLFEGGKGIATGAGAMIVLLPLEVLTAFIVWAVTGKIFKISSLASLAALLAFIVSSFIFNYDLEIHTHAPVFIIAFIIVYKHLPNIKRLIFKEECKVI.

A run of 6 helical transmembrane segments spans residues 3–23, 61–81, 87–107, 117–137, 144–164, and 167–187; these read NLII…LILT, IATI…LKFL, LLWS…YLLF, AGAM…VWAV, ISSL…FIFN, and LEIH…YKHL.

Belongs to the PlsY family. In terms of assembly, probably interacts with PlsX.

The protein localises to the cell inner membrane. It catalyses the reaction an acyl phosphate + sn-glycerol 3-phosphate = a 1-acyl-sn-glycero-3-phosphate + phosphate. It participates in lipid metabolism; phospholipid metabolism. Catalyzes the transfer of an acyl group from acyl-phosphate (acyl-PO(4)) to glycerol-3-phosphate (G3P) to form lysophosphatidic acid (LPA). This enzyme utilizes acyl-phosphate as fatty acyl donor, but not acyl-CoA or acyl-ACP. The chain is Glycerol-3-phosphate acyltransferase from Campylobacter jejuni subsp. doylei (strain ATCC BAA-1458 / RM4099 / 269.97).